A 105-amino-acid polypeptide reads, in one-letter code: uncharacterized protein (105 aa).

A signal peptide spans 1 to 19 (MKLVFIFATAAIMGVVVYG).

This is an uncharacterized protein from Magallana gigas (Pacific oyster).